A 227-amino-acid polypeptide reads, in one-letter code: UPF0173 metal-dependent hydrolase BCQ_4418 (227 aa).

This sequence belongs to the UPF0173 family.

This Bacillus cereus (strain Q1) protein is UPF0173 metal-dependent hydrolase BCQ_4418.